The sequence spans 263 residues: Indole-3-glycerol phosphate synthase (263 aa).

It belongs to the TrpC family.

The enzyme catalyses 1-(2-carboxyphenylamino)-1-deoxy-D-ribulose 5-phosphate + H(+) = (1S,2R)-1-C-(indol-3-yl)glycerol 3-phosphate + CO2 + H2O. The protein operates within amino-acid biosynthesis; L-tryptophan biosynthesis; L-tryptophan from chorismate: step 4/5. In Rhodospirillum rubrum (strain ATCC 11170 / ATH 1.1.1 / DSM 467 / LMG 4362 / NCIMB 8255 / S1), this protein is Indole-3-glycerol phosphate synthase.